A 728-amino-acid chain; its full sequence is Homoaconitase, mitochondrial (728 aa).

The transit peptide at 1 to 24 (MVAIPRLARLSVPAWALSARGRFY) directs the protein to the mitochondrion. C362, C422, and C425 together coordinate [4Fe-4S] cluster.

It belongs to the aconitase/IPM isomerase family. The cofactor is [4Fe-4S] cluster.

The protein localises to the mitochondrion. The catalysed reaction is (2R,3S)-homoisocitrate = cis-homoaconitate + H2O. It functions in the pathway amino-acid biosynthesis; L-lysine biosynthesis via AAA pathway; L-alpha-aminoadipate from 2-oxoglutarate: step 3/5. Catalyzes the reversible hydration of cis-homoaconitate to (2R,3S)-homoisocitrate, a step in the alpha-aminoadipate pathway for lysine biosynthesis. This chain is Homoaconitase, mitochondrial (LYS4), found in Cryptococcus neoformans var. neoformans serotype D (strain B-3501A) (Filobasidiella neoformans).